Reading from the N-terminus, the 468-residue chain is 3-isopropylmalate dehydratase large subunit (468 aa).

[4Fe-4S] cluster-binding residues include C349, C409, and C412.

It belongs to the aconitase/IPM isomerase family. LeuC type 1 subfamily. Heterodimer of LeuC and LeuD. [4Fe-4S] cluster serves as cofactor.

It carries out the reaction (2R,3S)-3-isopropylmalate = (2S)-2-isopropylmalate. It participates in amino-acid biosynthesis; L-leucine biosynthesis; L-leucine from 3-methyl-2-oxobutanoate: step 2/4. In terms of biological role, catalyzes the isomerization between 2-isopropylmalate and 3-isopropylmalate, via the formation of 2-isopropylmaleate. This chain is 3-isopropylmalate dehydratase large subunit, found in Shewanella baltica (strain OS223).